Consider the following 156-residue polypeptide: ATP synthase subunit b (156 aa).

The chain crosses the membrane as a helical span at residues 7-27; sequence LFLQAVVFAILVWFTMKFVWP.

The protein belongs to the ATPase B chain family. F-type ATPases have 2 components, F(1) - the catalytic core - and F(0) - the membrane proton channel. F(1) has five subunits: alpha(3), beta(3), gamma(1), delta(1), epsilon(1). F(0) has three main subunits: a(1), b(2) and c(10-14). The alpha and beta chains form an alternating ring which encloses part of the gamma chain. F(1) is attached to F(0) by a central stalk formed by the gamma and epsilon chains, while a peripheral stalk is formed by the delta and b chains.

The protein localises to the cell inner membrane. Its function is as follows. F(1)F(0) ATP synthase produces ATP from ADP in the presence of a proton or sodium gradient. F-type ATPases consist of two structural domains, F(1) containing the extramembraneous catalytic core and F(0) containing the membrane proton channel, linked together by a central stalk and a peripheral stalk. During catalysis, ATP synthesis in the catalytic domain of F(1) is coupled via a rotary mechanism of the central stalk subunits to proton translocation. In terms of biological role, component of the F(0) channel, it forms part of the peripheral stalk, linking F(1) to F(0). This chain is ATP synthase subunit b, found in Polaromonas naphthalenivorans (strain CJ2).